We begin with the raw amino-acid sequence, 254 residues long: MAIDSKPHDDLQLFKTNLHPCGYWPDRWASDLVMDPNDPRLGAIYPQALAWGFRRSGNLLYRPHCEHCNACVPVRVNVNAFVPNRSQRRCLARNATLVTRIVPAERNAEQLSLYRRYLHQRHPDGGMDGHGAIEFDQFLIGPWGYGRFMEIREPATNGTPGQLLAVAVTDLTHQALSAVYTFYEPNAAARGLGTLAILHQIHWAQREQRPYLYLGYWIKDHFKMDYKRRFQKLEIYDGYRWRPFSTTYPTTHTL.

This sequence belongs to the R-transferase family. Bpt subfamily.

The protein localises to the cytoplasm. The catalysed reaction is N-terminal L-glutamyl-[protein] + L-leucyl-tRNA(Leu) = N-terminal L-leucyl-L-glutamyl-[protein] + tRNA(Leu) + H(+). The enzyme catalyses N-terminal L-aspartyl-[protein] + L-leucyl-tRNA(Leu) = N-terminal L-leucyl-L-aspartyl-[protein] + tRNA(Leu) + H(+). Functionally, functions in the N-end rule pathway of protein degradation where it conjugates Leu from its aminoacyl-tRNA to the N-termini of proteins containing an N-terminal aspartate or glutamate. This chain is Aspartate/glutamate leucyltransferase, found in Xylella fastidiosa (strain 9a5c).